Here is a 495-residue protein sequence, read N- to C-terminus: Glycerol kinase (495 aa).

Threonine 11 lines the ADP pocket. Positions 11, 12, and 13 each coordinate ATP. Threonine 11 contributes to the sn-glycerol 3-phosphate binding site. Arginine 15 contributes to the ADP binding site. 4 residues coordinate sn-glycerol 3-phosphate: arginine 81, glutamate 82, tyrosine 133, and aspartate 242. Residues arginine 81, glutamate 82, tyrosine 133, aspartate 242, and glutamine 243 each coordinate glycerol. Residues threonine 264 and glycine 307 each coordinate ADP. Residues threonine 264, glycine 307, glutamine 311, and glycine 410 each coordinate ATP. An ADP-binding site is contributed by glycine 410.

It belongs to the FGGY kinase family.

It carries out the reaction glycerol + ATP = sn-glycerol 3-phosphate + ADP + H(+). It functions in the pathway polyol metabolism; glycerol degradation via glycerol kinase pathway; sn-glycerol 3-phosphate from glycerol: step 1/1. Inhibited by fructose 1,6-bisphosphate (FBP). In terms of biological role, key enzyme in the regulation of glycerol uptake and metabolism. Catalyzes the phosphorylation of glycerol to yield sn-glycerol 3-phosphate. This is Glycerol kinase from Roseobacter denitrificans (strain ATCC 33942 / OCh 114) (Erythrobacter sp. (strain OCh 114)).